The following is a 267-amino-acid chain: Thyroxine 5-deiodinase (267 aa).

The Cytoplasmic segment spans residues 1-15; that stretch reads MHDSGGVQMARALKH. Residues 16-36 form a helical; Signal-anchor for type II membrane protein membrane-spanning segment; the sequence is AALCLMLLPRFLLAAVMLWLL. Residues 37-267 are Extracellular-facing; it reads DFLCIRKKVL…VNSQTAVLHV (231 aa). Residue Sec131 is part of the active site. Sec131 is a non-standard amino acid (selenocysteine).

Belongs to the iodothyronine deiodinase family. Monomer. Homodimer. May undergo minor heretodimerization with DIO1 and DIO2.

The protein resides in the cell membrane. Its subcellular location is the endosome membrane. The enzyme catalyses 3,3',5'-triiodo-L-thyronine + iodide + A + H(+) = L-thyroxine + AH2. It catalyses the reaction 3,3'-diiodo-L-thyronine + iodide + A + H(+) = 3,3',5-triiodo-L-thyronine + AH2. The catalysed reaction is 3-iodo-L-thyronine + iodide + A + H(+) = 3,5-diiodo-L-thyronine + AH2. It carries out the reaction L-thyronine + iodide + A + H(+) = 3-iodo-L-thyronine + AH2. The enzyme catalyses 3',5'-diiodo-L-thyronine + iodide + A + H(+) = 3,3',5'-triiodo-L-thyronine + AH2. It catalyses the reaction 3'-iodo-L-thyronine + iodide + A + H(+) = 3,3'-diiodo-L-thyronine + AH2. The catalysed reaction is 3,3',5'-triiodothyronamine + iodide + A + H(+) = 3,3',5,5'-tetraiodothyronamine + AH2. It carries out the reaction 3',5'-diiodothyronamine + iodide + A + H(+) = 3,3',5'-triiodothyronamine + AH2. The enzyme catalyses 3,3'-diiodothyronamine + iodide + A + H(+) = 3,3',5-triiodothyronamine + AH2. It catalyses the reaction 3-iodothyronamine + iodide + A + H(+) = 3,5-diiodothyronamine + AH2. The catalysed reaction is 3'-iodothyronamine + iodide + A + H(+) = 3,3'-diiodothyronamine + AH2. It carries out the reaction thyronamine + iodide + A + H(+) = 3-iodothyronamine + AH2. Functionally, plays a crucial role in the metabolism of thyroid hormones (TH) and has specific roles in TH activation and inactivation by deiodination. Catalyzes the deiodination of L-thyroxine (T4) to 3,3',5'-triiodothyronine (rT3), 3,5,3'-triiodothyronine (T3) to 3,3'-diiodothyronine (3,3'-T2), 3,5-diiodothyronine (3,5-T2) to 3-monoiodothyronine (3-T1), rT3 to 3',5'-diiodothyronine (3',5'-T2) and 3,3'-T2 to 3'-monoiodothyronine (3'-T1) via inner-ring deiodination (IRD). Catalyzes the deiodination of 3-T1 to L-thyronine (T0) via outer-ring deiodination (ORD). Catalyzes the tyrosyl ring deiodinations of 3,3',5,5'-tetraiodothyronamine, 3,3',5'-triiodothyronamine, 3,5,3'-triiodothyronamine, 3,5-diiodothyronamine, 3,3'-diiodothyronamine and 3-iodothyronamine. This chain is Thyroxine 5-deiodinase (dio3), found in Sparus aurata (Gilthead sea bream).